The following is a 343-amino-acid chain: Phosphate acyltransferase (343 aa).

Belongs to the PlsX family. As to quaternary structure, homodimer. Probably interacts with PlsY.

The protein resides in the cytoplasm. It catalyses the reaction a fatty acyl-[ACP] + phosphate = an acyl phosphate + holo-[ACP]. Its pathway is lipid metabolism; phospholipid metabolism. In terms of biological role, catalyzes the reversible formation of acyl-phosphate (acyl-PO(4)) from acyl-[acyl-carrier-protein] (acyl-ACP). This enzyme utilizes acyl-ACP as fatty acyl donor, but not acyl-CoA. This chain is Phosphate acyltransferase, found in Coxiella burnetii (strain RSA 331 / Henzerling II).